The following is a 567-amino-acid chain: Proline--tRNA ligase (567 aa).

This sequence belongs to the class-II aminoacyl-tRNA synthetase family. ProS type 1 subfamily. Homodimer.

The protein resides in the cytoplasm. It carries out the reaction tRNA(Pro) + L-proline + ATP = L-prolyl-tRNA(Pro) + AMP + diphosphate. In terms of biological role, catalyzes the attachment of proline to tRNA(Pro) in a two-step reaction: proline is first activated by ATP to form Pro-AMP and then transferred to the acceptor end of tRNA(Pro). As ProRS can inadvertently accommodate and process non-cognate amino acids such as alanine and cysteine, to avoid such errors it has two additional distinct editing activities against alanine. One activity is designated as 'pretransfer' editing and involves the tRNA(Pro)-independent hydrolysis of activated Ala-AMP. The other activity is designated 'posttransfer' editing and involves deacylation of mischarged Ala-tRNA(Pro). The misacylated Cys-tRNA(Pro) is not edited by ProRS. In Campylobacter curvus (strain 525.92), this protein is Proline--tRNA ligase.